The sequence spans 306 residues: UDP-3-O-acyl-N-acetylglucosamine deacetylase (306 aa).

Zn(2+) contacts are provided by His81, His241, and Asp245. Residue His268 is the Proton donor of the active site.

It belongs to the LpxC family. Zn(2+) serves as cofactor.

The catalysed reaction is a UDP-3-O-[(3R)-3-hydroxyacyl]-N-acetyl-alpha-D-glucosamine + H2O = a UDP-3-O-[(3R)-3-hydroxyacyl]-alpha-D-glucosamine + acetate. It functions in the pathway glycolipid biosynthesis; lipid IV(A) biosynthesis; lipid IV(A) from (3R)-3-hydroxytetradecanoyl-[acyl-carrier-protein] and UDP-N-acetyl-alpha-D-glucosamine: step 2/6. Its function is as follows. Catalyzes the hydrolysis of UDP-3-O-myristoyl-N-acetylglucosamine to form UDP-3-O-myristoylglucosamine and acetate, the committed step in lipid A biosynthesis. In Hydrogenovibrio crunogenus (strain DSM 25203 / XCL-2) (Thiomicrospira crunogena), this protein is UDP-3-O-acyl-N-acetylglucosamine deacetylase.